A 151-amino-acid chain; its full sequence is Sperm surface protein Sp17 (151 aa).

2 disordered regions span residues 56 to 115 and 127 to 151; these read DPAE…EKEE and GHIA…EENK. Positions 62–98 are enriched in basic and acidic residues; sequence SKVEDRFYNNHAFEEQEPPEKSDPKQEESQISGKEEE. One can recognise an IQ domain in the interval 114–143; the sequence is EEVAAVKIQAAFRGHIAREEAKKMKTNSLQ.

As to quaternary structure, homodimer. May interact with ROPN1. As to expression, testis and sperm specific.

Its subcellular location is the membrane. In terms of biological role, sperm surface zona pellucida binding protein. Helps to bind spermatozoa to the zona pellucida with high affinity. Might function in binding zona pellucida and carbohydrates. The protein is Sperm surface protein Sp17 (SPA17) of Homo sapiens (Human).